Consider the following 1235-residue polypeptide: Insulin receptor substrate 1 (1235 aa).

Ser-3 is modified (phosphoserine). A mediates interaction with PHIP region spans residues 3–133 (SPPDTDGFSD…AGGGCGGSCS (131 aa)). The 104-residue stretch at 12 to 115 (DVRKVGYLRK…WYQALLQLHN (104 aa)) folds into the PH domain. Ser-99 bears the Phosphoserine; by CK2 mark. Positions 155-259 (FKEVWQVILK…EAMRAMSDEF (105 aa)) constitute an IRS-type PTB domain. A disordered region spans residues 258–425 (EFRPRTKSQS…SDGGFISSDE (168 aa)). A phosphoserine; by RPS6KB1 mark is found at Ser-265 and Ser-302. Positions 265–276 (SQSSSSCSNPIS) are enriched in low complexity. Ser-307 bears the Phosphoserine; by IKKB, MAPK8 and RPS6KB1 mark. Phosphoserine occurs at positions 318, 325, 340, and 343. Residues 349–358 (THAHRHRGSS) show a composition bias toward basic residues. Low complexity-rich tracts occupy residues 378–399 (SPSA…GSTS) and 407–419 (SSAS…SDGG). Position 414 is a phosphoserine (Ser-414). Thr-441 and Thr-448 each carry phosphothreonine. Tyr-460 is modified (phosphotyrosine; by INSR). Positions 460–463 (YICM) match the YXXM motif 1 motif. Thr-502 carries the post-translational modification Phosphothreonine; by CK2. Residues 520 to 539 (THSAGTSPTISHQKTPSQSS) are disordered. Ser-522 carries the phosphoserine; by RPS6KB1 modification. Over residues 522-539 (SAGTSPTISHQKTPSQSS) the composition is skewed to polar residues. 2 consecutive short sequence motifs (YXXM motif) follow at residues 546–549 (YTEM) and 608–611 (YMPM). Tyr-608 carries the phosphotyrosine; by INSR modification. At Ser-612 the chain carries Phosphoserine. The residue at position 628 (Tyr-628) is a Phosphotyrosine; by INSR. The YXXM motif 4 signature appears at 628-631 (YMPM). Position 632 is a phosphoserine; by RPS6KB1 and ROCK2 (Ser-632). Tyr-658 carries the phosphotyrosine modification. The short motif at 658 to 661 (YMMM) is the YXXM motif 5 element. Over residues 669 to 689 (PDIGGGSCSSSSISAAPSGSS) the composition is skewed to low complexity. Residues 669–720 (PDIGGGSCSSSSISAAPSGSSYGKPWTNGVGGHHTHALPHAKPPVESGGGKL) are disordered. Positions 727–730 (YMNM) match the YXXM motif 6 motif. The disordered stretch occupies residues 766–921 (FKHTQRPGEP…ATSRSSPSVR (156 aa)). Over residues 771 to 780 (RPGEPEEGAR) the composition is skewed to basic and acidic residues. 3 stretches are compositionally biased toward low complexity: residues 785–794 (RLSSSSGRLR), 801–810 (DSSSSTSSDS), and 872–881 (QQQQQQQQQQ). A Phosphoserine; by AMPK and SIK2 modification is found at Ser-789. Ser-891 is subject to Phosphoserine. Phosphotyrosine; by INSR occurs at positions 895, 939, and 987. Positions 895–897 (YVN) are GRB2-binding. 3 consecutive short sequence motifs (YXXM motif) follow at residues 939–942 (YMNM), 987–990 (YMTM), and 1010–1013 (YADM). Positions 1024 to 1165 (LPRTTGAAPP…SAPGCGAAGG (142 aa)) are disordered. Residues 1025 to 1046 (PRTTGAAPPPSSTASASASVTP) are compositionally biased toward low complexity. Positions 1072–1084 (TRVNLSPNHNQSA) are enriched in polar residues. Phosphoserine is present on Ser-1099. Ser-1100 is modified (phosphoserine; by RPS6KB1). Positions 1101–1114 (ETFSAPTRAANTVS) are enriched in polar residues. Residues 1118–1128 (GAAGGGSGGGS) show a composition bias toward gly residues. The residue at position 1172 (Tyr-1172) is a Phosphotyrosine; by INSR. Positions 1177 to 1235 (LVKDVKQHPQDCPSQQQSLPPPPPHQPLGSNEGSSPRRSSEDLSTYASINFQKQPEDRQ) are disordered. A Glycyl lysine isopeptide (Lys-Gly) (interchain with G-Cter in ubiquitin) cross-link involves residue Lys-1179. Over residues 1204–1229 (LGSNEGSSPRRSSEDLSTYASINFQK) the composition is skewed to polar residues. At Tyr-1222 the chain carries Phosphotyrosine; by INSR.

As to quaternary structure, interacts with SOCS7. Interacts (via IRS-type PTB domain) with IGF1R and INSR (via the tyrosine-phosphorylated NPXY motif). Interacts with UBTF, FER and PIK3CA. Interacts (via phosphorylated YXXM motifs) with PIK3R1. Interacts with ROCK1. Interacts (via PH domain) with PHIP. Interacts with GRB2. Interacts with ALK. Interacts with EIF2AK2/PKR. Interacts with GKAP1. Interacts with DGKZ in the absence of insulin; insulin stimulation decreases this interaction. Found in a ternary complex with DGKZ and PIP5K1A in the absence of insulin stimulation. Interacts with SQSTM1; the interaction is disrupted by the presence of tensin TNS2. Interacts with NCK1 (via SH2 domain). Interacts with NCK2 (via SH3 domain). Interacts with SH2B1; this interaction enhances leptin-induced activation of the PI3-kinase pathway. Interacts with DVL2; this interaction promotes the Wnt/beta-catenin signaling pathway. Interacts with JAK1. Serine phosphorylation of IRS1 is a mechanism for insulin resistance. Ser-307 phosphorylation inhibits insulin action through disruption of IRS1 interaction with the insulin receptor, and Ser-789 phosphorylation is increased in the liver of insulin-resistant rats. Phosphorylation of Tyr-895 is required for GRB2-binding. Phosphorylated by ALK. Phosphorylated at Ser-265, Ser-302, Ser-632 and Ser-1100 by RPS6KB1; phosphorylation induces accelerated degradation of IRS1. Phosphorylated on tyrosine residues in response to insulin. In skeletal muscles, dephosphorylated on Tyr-608 by TNS2 under anabolic conditions; dephosphorylation results in the proteasomal degradation of IRS1. In terms of processing, ubiquitinated by the Cul7-RING(FBXW8) complex in a mTOR-dependent manner, leading to its degradation: the Cul7-RING(FBXW8) complex recognizes and binds IRS1 previously phosphorylated by S6 kinase (RPS6KB1 or RPS6KB2). Ubiquitinated by TRAF4 through 'Lys-29' linkage; this ubiquitination regulates the interaction of IRS1 with IGFR and IRS1 tyrosine phosphorylation upon IGF1 stimulation. Post-translationally, S-nitrosylation at by BLVRB inhibits its activity.

Its subcellular location is the cytoplasm. It localises to the nucleus. In terms of biological role, signaling adapter protein that participates in the signal transduction from two prominent receptor tyrosine kinases, insulin receptor/INSR and insulin-like growth factor I receptor/IGF1R. Plays therefore an important role in development, growth, glucose homeostasis as well as lipid metabolism. Upon phosphorylation by the insulin receptor, functions as a signaling scaffold that propagates insulin action through binding to SH2 domain-containing proteins including the p85 regulatory subunit of PI3K, NCK1, NCK2, GRB2 or SHP2. Recruitment of GRB2 leads to the activation of the guanine nucleotide exchange factor SOS1 which in turn triggers the Ras/Raf/MEK/MAPK signaling cascade. Activation of the PI3K/AKT pathway is responsible for most of insulin metabolic effects in the cell, and the Ras/Raf/MEK/MAPK is involved in the regulation of gene expression and in cooperation with the PI3K pathway regulates cell growth and differentiation. Acts a positive regulator of the Wnt/beta-catenin signaling pathway through suppression of DVL2 autophagy-mediated degradation leading to cell proliferation. The polypeptide is Insulin receptor substrate 1 (Irs1) (Rattus norvegicus (Rat)).